We begin with the raw amino-acid sequence, 967 residues long: Aminopeptidase N (967 aa).

Residues 2–8 (AKGFYIS) are Cytoplasmic-facing. Residues 9–32 (KSLGILGILLGVAAVCTIIALSVV) traverse the membrane as a helical; Signal-anchor for type II membrane protein segment. Residues 33–68 (YSQEKNKNANSSPVASTTPSASATTNPASATTLDQS) form a cytosolic Ser/Thr-rich junction region. Over 33-967 (YSQEKNKNAN…VLQWFTENSK (935 aa)) the chain is Extracellular. Residues 40–62 (NANSSPVASTTPSASATTNPASA) are disordered. Residues 41 to 62 (ANSSPVASTTPSASATTNPASA) show a composition bias toward low complexity. Positions 69 to 967 (KAWNRYRLPN…VLQWFTENSK (899 aa)) are metalloprotease. An N-linked (GlcNAc...) asparagine glycan is attached at Asn128. Tyr176 carries the sulfotyrosine modification. N-linked (GlcNAc...) asparagine glycosylation is found at Asn234 and Asn265. The necessary and sufficient to mediate interaction with HCoV-229E stretch occupies residues 288–295 (DYVEKQAS). Asn319 carries N-linked (GlcNAc...) asparagine glycosylation. 352-356 (GAMEN) is a binding site for substrate. Residue His388 participates in Zn(2+) binding. Glu389 acts as the Proton acceptor in catalysis. Zn(2+)-binding residues include His392 and Glu411. Tyr419 and Tyr424 each carry sulfotyrosine. 5 N-linked (GlcNAc...) asparagine glycosylation sites follow: Asn527, Asn573, Asn625, Asn681, and Asn735. Cystine bridges form between Cys761–Cys768 and Cys798–Cys834. Asn818 carries N-linked (GlcNAc...) asparagine glycosylation. The residue at position 913 (Tyr913) is a Sulfotyrosine.

Belongs to the peptidase M1 family. In terms of assembly, homodimer. Interacts with SLC6A19. As to quaternary structure, (Microbial infection) Interacts with the S1 domain of human coronavirus 229E/HCoV-229E spike protein. The cofactor is Zn(2+). Sulfated. Post-translationally, N- and O-glycosylated. In terms of processing, may undergo proteolysis and give rise to a soluble form. As to expression, expressed in epithelial cells of the kidney, intestine, and respiratory tract; granulocytes, monocytes, fibroblasts, endothelial cells, cerebral pericytes at the blood-brain barrier, synaptic membranes of cells in the CNS. Also expressed in endometrial stromal cells, but not in the endometrial glandular cells. Found in the vasculature of tissues that undergo angiogenesis and in malignant gliomas and lymph node metastases from multiple tumor types but not in blood vessels of normal tissues. A soluble form has been found in plasma. It is found to be elevated in plasma and effusions of cancer patients.

The protein localises to the cell membrane. It catalyses the reaction Release of an N-terminal amino acid, Xaa-|-Yaa- from a peptide, amide or arylamide. Xaa is preferably Ala, but may be most amino acids including Pro (slow action). When a terminal hydrophobic residue is followed by a prolyl residue, the two may be released as an intact Xaa-Pro dipeptide.. In terms of biological role, broad specificity aminopeptidase which plays a role in the final digestion of peptides generated from hydrolysis of proteins by gastric and pancreatic proteases. Also involved in the processing of various peptides including peptide hormones, such as angiotensin III and IV, neuropeptides, and chemokines. May also be involved the cleavage of peptides bound to major histocompatibility complex class II molecules of antigen presenting cells. May have a role in angiogenesis and promote cholesterol crystallization. May have a role in amino acid transport by acting as binding partner of amino acid transporter SLC6A19 and regulating its activity. Its function is as follows. (Microbial infection) Acts as a receptor for human coronavirus 229E/HCoV-229E. In case of human coronavirus 229E (HCoV-229E) infection, serves as receptor for HCoV-229E spike glycoprotein. Functionally, (Microbial infection) Mediates as well Human cytomegalovirus (HCMV) infection. This is Aminopeptidase N (ANPEP) from Homo sapiens (Human).